Here is a 580-residue protein sequence, read N- to C-terminus: Acyl-coenzyme A synthetase ACSM3, mitochondrial (580 aa).

A mitochondrion-targeting transit peptide spans 1 to 21 (MAMLLRARCFHRLAIPDPRRI). N6-succinyllysine is present on residues K67 and K100. Position 151 is an N6-acetyllysine (K151). Residues 229-237 (TSGTTGPPK), 368-373 (EGYGQT), D455, R470, and K566 each bind ATP.

This sequence belongs to the ATP-dependent AMP-binding enzyme family. Mg(2+) is required as a cofactor. Mn(2+) serves as cofactor.

It is found in the mitochondrion. The protein resides in the mitochondrion matrix. It catalyses the reaction a medium-chain fatty acid + ATP + CoA = a medium-chain fatty acyl-CoA + AMP + diphosphate. The catalysed reaction is propanoate + ATP + CoA = propanoyl-CoA + AMP + diphosphate. It carries out the reaction butanoate + ATP + CoA = butanoyl-CoA + AMP + diphosphate. The enzyme catalyses 2-methylpropanoate + ATP + CoA = 2-methylpropanoyl-CoA + AMP + diphosphate. It catalyses the reaction 2-methylbutanoate + ATP + CoA = 2-methylbutanoyl-CoA + AMP + diphosphate. The catalysed reaction is octanoate + ATP + CoA = octanoyl-CoA + AMP + diphosphate. In terms of biological role, catalyzes the activation of fatty acids by CoA to produce an acyl-CoA, the first step in fatty acid metabolism. Capable of activating medium-chain fatty acids with a preference for isobutyrate among fatty acids with 2-6 carbon atoms. This chain is Acyl-coenzyme A synthetase ACSM3, mitochondrial (Acsm3), found in Rattus norvegicus (Rat).